A 100-amino-acid polypeptide reads, in one-letter code: Co-chaperonin GroES (100 aa).

Belongs to the GroES chaperonin family. As to quaternary structure, heptamer of 7 subunits arranged in a ring. Interacts with the chaperonin GroEL.

The protein resides in the cytoplasm. Functionally, together with the chaperonin GroEL, plays an essential role in assisting protein folding. The GroEL-GroES system forms a nano-cage that allows encapsulation of the non-native substrate proteins and provides a physical environment optimized to promote and accelerate protein folding. GroES binds to the apical surface of the GroEL ring, thereby capping the opening of the GroEL channel. This chain is Co-chaperonin GroES, found in Nocardia farcinica (strain IFM 10152).